We begin with the raw amino-acid sequence, 229 residues long: Uracil-DNA glycosylase (229 aa).

Aspartate 65 serves as the catalytic Proton acceptor.

It belongs to the uracil-DNA glycosylase (UDG) superfamily. UNG family.

It localises to the cytoplasm. The enzyme catalyses Hydrolyzes single-stranded DNA or mismatched double-stranded DNA and polynucleotides, releasing free uracil.. Its function is as follows. Excises uracil residues from the DNA which can arise as a result of misincorporation of dUMP residues by DNA polymerase or due to deamination of cytosine. The polypeptide is Uracil-DNA glycosylase (Oceanobacillus iheyensis (strain DSM 14371 / CIP 107618 / JCM 11309 / KCTC 3954 / HTE831)).